The primary structure comprises 154 residues: Anaerobic ribonucleoside-triphosphate reductase-activating protein (154 aa).

Residues cysteine 26, cysteine 30, and cysteine 33 each coordinate [4Fe-4S] cluster. Residues 32–34 and glycine 74 contribute to the S-adenosyl-L-methionine site; that span reads GCY.

This sequence belongs to the organic radical-activating enzymes family. As to quaternary structure, forms a tetramer composed of two NrdD and two NrdG subunits. The cofactor is [4Fe-4S] cluster.

It is found in the cytoplasm. The catalysed reaction is glycyl-[protein] + reduced [flavodoxin] + S-adenosyl-L-methionine = glycin-2-yl radical-[protein] + semiquinone [flavodoxin] + 5'-deoxyadenosine + L-methionine + H(+). Its function is as follows. Activation of anaerobic ribonucleoside-triphosphate reductase under anaerobic conditions by generation of an organic free radical, using S-adenosylmethionine and reduced flavodoxin as cosubstrates to produce 5'-deoxy-adenosine. This is Anaerobic ribonucleoside-triphosphate reductase-activating protein (nrdG) from Salmonella typhi.